Reading from the N-terminus, the 52-residue chain is uncharacterized protein (52 aa).

This is an uncharacterized protein from Dictyostelium discoideum (Social amoeba).